A 496-amino-acid polypeptide reads, in one-letter code: MQRDCIMDYKESCPSVSIPSSDEHREKKKRFTVYKVLVSVGRSEWFVFRRYAEFDKLYNSLKKQFPAMALKIPAKRIFGDNFDPDFIKQRRAGLNEFIQNLVRYPELYNHPDVRAFLQMDSPRHQSDPSEDEDERSTSKPHSTSRNINLGPTGNPHAKPTDFDFLKVIGKGSFGKVLLAKRKLDGKFYAVKVLQKKIVLNRKEQKHIMAERNVLLKNVKHPFLVGLHYSFQTTEKLYFVLDFVNGGELFFHLQRERSFPEPRARFYAAEIASALGYLHSIKIVYRDLKPENILLDSMGHVVLTDFGLCKEGIAISDTTTTFCGTPEYLAPEVIRKQPYDNTVDWWCLGAVLYEMLYGLPPFYCRDVAEMYDNILHKPLNLRPGVSLTAWSILEELLEKNRQNRLGAKEDFLEIQNHPFFESLSWTDLVQKKIPPPFNPNVAGPDDIRNFDAVFTEETVPYSVCVSSDYSIVNASVLEADDAFVGFSYAPPSEDLFL.

The PX domain occupies S12–H124. A disordered region spans residues S121–A157. Phosphoserine is present on residues S126 and S129. The segment covering K139–P151 has biased composition (polar residues). The 258-residue stretch at F162 to F419 folds into the Protein kinase domain. ATP is bound by residues I168 to V176 and K191. The Nuclear localization signal signature appears at K195 to K205. The active-site Proton acceptor is D286. T320 is modified (phosphothreonine; by PDPK1). In terms of domain architecture, AGC-kinase C-terminal spans E420–L496. The residue at position 486 (S486) is a Phosphoserine.

This sequence belongs to the protein kinase superfamily. AGC Ser/Thr protein kinase family. As to quaternary structure, interacts with GSK3B and FLII. Interacts with PDPK1 in a phosphorylation-dependent manner. In terms of processing, activated by phosphorylation on Ser-486 by an unknown kinase (may be mTORC2 but not confirmed), transforming it into a substrate for PDPK1 which then phosphorylates it on Thr-320. In terms of tissue distribution, widely expressed, predominantly in the heart, spleen and 7-day embryo.

It localises to the cytoplasmic vesicle. The protein resides in the early endosome. It is found in the recycling endosome. The enzyme catalyses L-seryl-[protein] + ATP = O-phospho-L-seryl-[protein] + ADP + H(+). The catalysed reaction is L-threonyl-[protein] + ATP = O-phospho-L-threonyl-[protein] + ADP + H(+). Two specific sites, one in the kinase domain (Thr-320) and the other in the C-terminal regulatory region (Ser-486), need to be phosphorylated for its full activation. In terms of biological role, serine/threonine-protein kinase which is involved in the regulation of a wide variety of ion channels, membrane transporters, cell growth, proliferation, survival and migration. Up-regulates Na(+) channels: SCNN1A/ENAC and SCN5A, K(+) channels: KCNA3/KV1.3, KCNE1, KCNQ1 and KCNH2/HERG, epithelial Ca(2+) channels: TRPV5 and TRPV6, chloride channel: BSND, creatine transporter: SLC6A8, Na(+)/dicarboxylate cotransporter: SLC13A2/NADC1, Na(+)-dependent phosphate cotransporter: SLC34A2/NAPI-2B, amino acid transporters: SLC1A5/ASCT2 and SLC6A19, glutamate transporters: SLC1A3/EAAT1, SLC1A6/EAAT4 and SLC1A7/EAAT5, glutamate receptors: GRIA1/GLUR1 and GRIK2/GLUR6, Na(+)/H(+) exchanger: SLC9A3/NHE3, and the Na(+)/K(+) ATPase. Plays a role in the regulation of renal tubular phosphate transport and bone density. Phosphorylates NEDD4L and GSK3B. Positively regulates ER transcription activity through phosphorylation of FLII. Negatively regulates the function of ITCH/AIP4 via its phosphorylation and thereby prevents CXCR4 from being efficiently sorted to lysosomes. The sequence is that of Serine/threonine-protein kinase Sgk3 (Sgk3) from Mus musculus (Mouse).